We begin with the raw amino-acid sequence, 114 residues long: Ribosome-binding factor A (114 aa).

Belongs to the RbfA family. In terms of assembly, monomer. Binds 30S ribosomal subunits, but not 50S ribosomal subunits or 70S ribosomes.

Its subcellular location is the cytoplasm. In terms of biological role, one of several proteins that assist in the late maturation steps of the functional core of the 30S ribosomal subunit. Associates with free 30S ribosomal subunits (but not with 30S subunits that are part of 70S ribosomes or polysomes). Required for efficient processing of 16S rRNA. May interact with the 5'-terminal helix region of 16S rRNA. The chain is Ribosome-binding factor A from Vesicomyosocius okutanii subsp. Calyptogena okutanii (strain HA).